The primary structure comprises 333 residues: MAASAHGSVWGPLRLGIPGLCCRRPPLGLYARMRRLPGPEVSGRSVAAASGPGAWGTDHYCLELLRKRDYEGYLCSLLLPAESRSSVFALRAFNVELAQVKDSVSEKTIGLMRMQFWKKTVEDIYCDNPPHQPVAIELWKAVKRHNLTKRWLMKIVDEREKNLDDKAYRNIKELENYAENTQSSLLYLTLEILGIKDLHADHAASHIGKAQGIVTCLRATPYHGSRRKVFLPMDICMLHGVSQEDFLRRNQDKNVRDVIYDIASQAHLHLKHARSFHKTVPVKAFPAFLQTVSLEDFLKKIQRVDFDIFHPSLQQKNTLLPLYLYIQSWRKTY.

Residues 1–44 constitute a mitochondrion transit peptide; that stretch reads MAASAHGSVWGPLRLGIPGLCCRRPPLGLYARMRRLPGPEVSGR.

It belongs to the NDUFAF6 family. Widely expressed. A lower expression is observed in lung and kidney compared to heart, muscle and liver. In the kidney, expression is high in the basal zone of the proximal tubular cells.

It localises to the mitochondrion inner membrane. Its subcellular location is the cytoplasm. The protein localises to the nucleus. In terms of biological role, involved in the assembly of mitochondrial NADH:ubiquinone oxidoreductase complex (complex I) at early stages. May play a role in the biogenesis of complex I subunit MT-ND1. This is NADH dehydrogenase (ubiquinone) complex I, assembly factor 6 (NDUFAF6) from Homo sapiens (Human).